A 467-amino-acid chain; its full sequence is Argininosuccinate lyase (467 aa).

The protein belongs to the lyase 1 family. Argininosuccinate lyase subfamily.

The protein localises to the cytoplasm. The catalysed reaction is 2-(N(omega)-L-arginino)succinate = fumarate + L-arginine. The protein operates within amino-acid biosynthesis; L-arginine biosynthesis; L-arginine from L-ornithine and carbamoyl phosphate: step 3/3. In Anaeromyxobacter dehalogenans (strain 2CP-C), this protein is Argininosuccinate lyase.